The sequence spans 631 residues: tRNA uridine 5-carboxymethylaminomethyl modification enzyme MnmG (631 aa).

Residues 13–18 (GGGHAG), Val-125, and Ser-180 contribute to the FAD site. Residue 273-287 (GPRYCPSIEDKVMRF) coordinates NAD(+). FAD is bound at residue Gln-370.

The protein belongs to the MnmG family. In terms of assembly, homodimer. Heterotetramer of two MnmE and two MnmG subunits. FAD serves as cofactor.

Its subcellular location is the cytoplasm. Its function is as follows. NAD-binding protein involved in the addition of a carboxymethylaminomethyl (cmnm) group at the wobble position (U34) of certain tRNAs, forming tRNA-cmnm(5)s(2)U34. This is tRNA uridine 5-carboxymethylaminomethyl modification enzyme MnmG from Vibrio parahaemolyticus serotype O3:K6 (strain RIMD 2210633).